We begin with the raw amino-acid sequence, 288 residues long: tRNA dimethylallyltransferase (288 aa).

Residue 17–24 coordinates ATP; it reads GPTASGKS. Substrate is bound at residue 19–24; it reads TASGKS.

It belongs to the IPP transferase family. As to quaternary structure, monomer. Requires Mg(2+) as cofactor.

It catalyses the reaction adenosine(37) in tRNA + dimethylallyl diphosphate = N(6)-dimethylallyladenosine(37) in tRNA + diphosphate. Catalyzes the transfer of a dimethylallyl group onto the adenine at position 37 in tRNAs that read codons beginning with uridine, leading to the formation of N6-(dimethylallyl)adenosine (i(6)A). The polypeptide is tRNA dimethylallyltransferase (Ruegeria sp. (strain TM1040) (Silicibacter sp.)).